Here is an 81-residue protein sequence, read N- to C-terminus: Adenoregulin-related peptide (81 aa).

A signal peptide spans 1-22; sequence MAFLKKSLLLVLFLGLVSLSIC. A propeptide spanning residues 23-43 is cleaved from the precursor; sequence EEEKRENEDEEEQEDDEQSEM. The segment at 24–46 is disordered; that stretch reads EEKRENEDEEEQEDDEQSEMKRG. Positions 30-40 are enriched in acidic residues; that stretch reads EDEEEQEDDEQ. Ile-78 is modified (isoleucine amide). The propeptide occupies 79–81; the sequence is GEQ.

In terms of tissue distribution, expressed by the skin glands.

The protein resides in the secreted. Its function is as follows. Has antibacterial activity against Gram-positive bacterium M.luteus NCT C2665 and against Gram-negative bacterium E.coli K12D31. The chain is Adenoregulin-related peptide from Agalychnis callidryas (Red-eyed tree frog).